A 513-amino-acid polypeptide reads, in one-letter code: ATP synthase subunit alpha (513 aa).

171-178 lines the ATP pocket; sequence GDRQIGKT.

Belongs to the ATPase alpha/beta chains family. F-type ATPases have 2 components, CF(1) - the catalytic core - and CF(0) - the membrane proton channel. CF(1) has five subunits: alpha(3), beta(3), gamma(1), delta(1), epsilon(1). CF(0) has three main subunits: a(1), b(2) and c(9-12). The alpha and beta chains form an alternating ring which encloses part of the gamma chain. CF(1) is attached to CF(0) by a central stalk formed by the gamma and epsilon chains, while a peripheral stalk is formed by the delta and b chains.

The protein localises to the cell membrane. It carries out the reaction ATP + H2O + 4 H(+)(in) = ADP + phosphate + 5 H(+)(out). Produces ATP from ADP in the presence of a proton gradient across the membrane. The alpha chain is a regulatory subunit. The polypeptide is ATP synthase subunit alpha (Wolbachia pipientis wMel).